Reading from the N-terminus, the 328-residue chain is MEWDNGTGQALGLPPTTCVYRENFKQLLLPPVYSAVLAAGLPLNICVITQICTSRRALTRTAVYTLNLALADLLYACSLPLLIYNYAQGDHWPFGDFACRLVRFLFYANLHGSILFLTCISFQRYLGICHPLAPWHKRGGRRAAWLVCVAVWLAVTTQCLPTAIFAATGIQRNRTVCYDLSPPALATHYMPYGMALTVIGFLLPFAALLACYCLLACRLCRQDGPAEPVAQERRGKAARMAVVVAAAFAISFLPFHITKTAYLAVRSTPGVPCTVLEAFAAAYKGTRPFASANSVLDPILFYFTQKKFRRRPHELLQKLTAKWQRQGR.

Residues 1–27 (MEWDNGTGQALGLPPTTCVYRENFKQL) lie on the Extracellular side of the membrane. A glycan (N-linked (GlcNAc...) asparagine) is linked at asparagine 5. A helical membrane pass occupies residues 28–48 (LLPPVYSAVLAAGLPLNICVI). Residues 49–62 (TQICTSRRALTRTA) are Cytoplasmic-facing. The helical transmembrane segment at 63 to 83 (VYTLNLALADLLYACSLPLLI) threads the bilayer. The Extracellular portion of the chain corresponds to 84–101 (YNYAQGDHWPFGDFACRL). An intrachain disulfide couples cysteine 99 to cysteine 177. A helical membrane pass occupies residues 102–122 (VRFLFYANLHGSILFLTCISF). Residues 123–144 (QRYLGICHPLAPWHKRGGRRAA) are Cytoplasmic-facing. The chain crosses the membrane as a helical span at residues 145-165 (WLVCVAVWLAVTTQCLPTAIF). Over 166-194 (AATGIQRNRTVCYDLSPPALATHYMPYGM) the chain is Extracellular. Residues 195 to 215 (ALTVIGFLLPFAALLACYCLL) form a helical membrane-spanning segment. The Cytoplasmic portion of the chain corresponds to 216 to 236 (ACRLCRQDGPAEPVAQERRGK). Residues 237-257 (AARMAVVVAAAFAISFLPFHI) form a helical membrane-spanning segment. The Extracellular portion of the chain corresponds to 258-280 (TKTAYLAVRSTPGVPCTVLEAFA). The helical transmembrane segment at 281-303 (AAYKGTRPFASANSVLDPILFYF) threads the bilayer. The Cytoplasmic segment spans residues 304–328 (TQKKFRRRPHELLQKLTAKWQRQGR).

This sequence belongs to the G-protein coupled receptor 1 family.

It localises to the cell membrane. Receptor for extracellular UDP &gt; UTP &gt; ATP. The activity of this receptor is mediated by G proteins which activate a phosphatidylinositol-calcium second messenger system. The polypeptide is P2Y purinoceptor 6 (P2RY6) (Homo sapiens (Human)).